We begin with the raw amino-acid sequence, 474 residues long: E3 ubiquitin-protein ligase rnf168 (474 aa).

Positions M1 to V12 are enriched in basic and acidic residues. Residues M1–K20 are disordered. The RING-type zinc-finger motif lies at C26–R65. Positions V119–V137 match the LR motif 1 motif. The UMI motif motif lies at E152 to A160. The short motif at E174–G195 is the MIU motif 1 element. Residues L192–N203 are compositionally biased toward polar residues. 2 disordered regions span residues L192–S259 and I367–S474. Residues P233 to S243 show a composition bias toward low complexity. The short motif at R353 to S376 is the MIU motif 2 element. Basic and acidic residues predominate over residues I367–S383. The LR motif 2 motif lies at R379–R390. Polar residues-rich tracts occupy residues D385–P402 and K409–N418. Residues R422 to L432 show a composition bias toward basic and acidic residues. The segment covering V443–K457 has biased composition (low complexity).

The protein belongs to the RNF168 family. As to quaternary structure, monomer.

The protein resides in the nucleus. It carries out the reaction S-ubiquitinyl-[E2 ubiquitin-conjugating enzyme]-L-cysteine + [acceptor protein]-L-lysine = [E2 ubiquitin-conjugating enzyme]-L-cysteine + N(6)-ubiquitinyl-[acceptor protein]-L-lysine.. It participates in protein modification; protein ubiquitination. E3 ubiquitin-protein ligase required for accumulation of repair proteins to sites of DNA damage. Acts with ube2n/ubc13 to amplify the rnf8-dependent histone ubiquitination. Recruited to sites of DNA damage at double-strand breaks (DSBs) by binding to ubiquitinated histone H2A and ubiquitinates histone H2A and H2AX, leading to amplify the rnf8-dependent H2A ubiquitination and promoting the formation of 'Lys-63'-linked ubiquitin conjugates. This leads to concentrate ubiquitinated histones H2A and H2AX at DNA lesions. Catalyzes monoubiquitination of 'Lys-13' and 'Lys-15' of nucleosomal histone H2A (H2AK13Ub and H2AK15Ub, respectively). This Danio rerio (Zebrafish) protein is E3 ubiquitin-protein ligase rnf168.